The primary structure comprises 48 residues: ATP synthase protein 8 (48 aa).

At Met-1 the chain carries N-formylmethionine. Residues 1–12 (MPQLIPFFFLNQ) are Mitochondrial intermembrane-facing. Residues 13 to 33 (LFYGYLALFALLVLVSWVILP) traverse the membrane as a helical segment. Over 34-48 (YLLQLQIVRLLITKL) the chain is Mitochondrial matrix.

As to quaternary structure, F-type ATP synthases have 2 components, the catalytic core F(1) and the membrane-embedded component F(0), linked together by a central stalk and a peripheral stalk. The central stalk, also called rotor shaft, is often seen as part of F(1). The peripheral stalk is seen as part of F(0). F(0) contains the membrane channel next to the rotor. F-type ATP synthases form dimers but each monomer functions independently in ATP generation. The dimer consists of 18 different polypeptides: ATP1 (subunit alpha, part of F(1), 3 molecules per monomer), ATP2 (subunit beta, part of F(1), 3 molecules per monomer), ATP3 (subunit gamma, part of the central stalk), ATP4 (subunit b, part of the peripheral stalk), ATP5/OSCP (subunit 5/OSCP, part of the peripheral stalk), ATP6 (subunit a, part of the peripheral stalk), ATP7 (subunit d, part of the peripheral stalk), ATP8 (subunit 8, part of the peripheral stalk), OLI1 (subunit c, part of the rotor, 10 molecules per monomer), ATP14 (subunit h, part of the peripheral stalk), ATP15 (subunit epsilon, part of the central stalk), ATP16 (subunit delta, part of the central stalk), ATP17 (subunit f, part of the peripheral stalk), ATP18 (subunit i/j, part of the peripheral stalk). Dimer-specific subunits are ATP19 (subunit k, at interface between monomers), ATP20 (subunit g, at interface between monomers), TIM11 (subunit e, at interface between monomers). Also contains subunit L.

It is found in the mitochondrion inner membrane. Its function is as follows. Mitochondrial membrane ATP synthase (F(1)F(0) ATP synthase or Complex V) produces ATP from ADP in the presence of a proton gradient across the membrane which is generated by electron transport complexes of the respiratory chain. F-type ATP synthases consist of two structural domains, F(1) - containing the extramembraneous catalytic core, and F(0) - containing the membrane proton channel, linked together by a central stalk and a peripheral stalk. During catalysis, ATP synthesis in the catalytic domain of F(1) is coupled via a rotary mechanism of the central stalk subunits to proton translocation. Part of the complex F(0) domain. Minor subunit located with subunit a/ATP6 in the membrane. In Pichia angusta (Yeast), this protein is ATP synthase protein 8.